The sequence spans 148 residues: Nucleoside diphosphate kinase (148 aa).

Residues Lys9, Phe57, Arg85, Thr91, Arg102, and Asn112 each contribute to the ATP site. At Thr91 the chain carries Phosphothreonine. His115 functions as the Pros-phosphohistidine intermediate in the catalytic mechanism. Ser122 carries the post-translational modification Phosphoserine.

The protein belongs to the NDK family. Homotetramer. Mg(2+) serves as cofactor.

It is found in the cytoplasm. The enzyme catalyses a 2'-deoxyribonucleoside 5'-diphosphate + ATP = a 2'-deoxyribonucleoside 5'-triphosphate + ADP. It catalyses the reaction a ribonucleoside 5'-diphosphate + ATP = a ribonucleoside 5'-triphosphate + ADP. Its function is as follows. Major role in the synthesis of nucleoside triphosphates other than ATP. The ATP gamma phosphate is transferred to the NDP beta phosphate via a ping-pong mechanism, using a phosphorylated active-site intermediate. This is Nucleoside diphosphate kinase from Bacillus anthracis.